We begin with the raw amino-acid sequence, 54 residues long: U-myrmicitoxin(01)-Tb5a (54 aa).

The first 26 residues, 1–26 (MQLSHLLLAFAMIFVMTIMYAPQVQA), serve as a signal peptide directing secretion. A propeptide spanning residues 27 to 38 (DAWADANADADV) is cleaved from the precursor.

It belongs to the formicidae venom precursor-01 superfamily. Post-translationally, contains 1 disulfide bond. Expressed by the venom gland.

Its subcellular location is the secreted. This is U-myrmicitoxin(01)-Tb5a from Tetramorium bicarinatum (Tramp ant).